A 398-amino-acid chain; its full sequence is 1-deoxy-D-xylulose 5-phosphate reductoisomerase (398 aa).

Residues Thr-10, Gly-11, Ser-12, Ile-13, Gly-36, Lys-37, Asn-38, and Asn-124 each coordinate NADPH. Lys-125 contacts 1-deoxy-D-xylulose 5-phosphate. Glu-126 is an NADPH binding site. Asp-150 is a Mn(2+) binding site. 1-deoxy-D-xylulose 5-phosphate contacts are provided by Ser-151, Glu-152, Ser-186, and His-209. Mn(2+) is bound at residue Glu-152. Gly-215 lines the NADPH pocket. Residues Ser-222, Asn-227, Lys-228, and Glu-231 each coordinate 1-deoxy-D-xylulose 5-phosphate. Mn(2+) is bound at residue Glu-231.

Belongs to the DXR family. Homodimer. Mg(2+) is required as a cofactor. The cofactor is Mn(2+).

It catalyses the reaction 2-C-methyl-D-erythritol 4-phosphate + NADP(+) = 1-deoxy-D-xylulose 5-phosphate + NADPH + H(+). The protein operates within isoprenoid biosynthesis; isopentenyl diphosphate biosynthesis via DXP pathway; isopentenyl diphosphate from 1-deoxy-D-xylulose 5-phosphate: step 1/6. Catalyzes the NADPH-dependent rearrangement and reduction of 1-deoxy-D-xylulose-5-phosphate (DXP) to 2-C-methyl-D-erythritol 4-phosphate (MEP). In Shigella flexneri, this protein is 1-deoxy-D-xylulose 5-phosphate reductoisomerase.